Reading from the N-terminus, the 317-residue chain is tRNA(Ile)-lysidine synthase (317 aa).

Serine 30–serine 35 provides a ligand contact to ATP.

Belongs to the tRNA(Ile)-lysidine synthase family.

It localises to the cytoplasm. The catalysed reaction is cytidine(34) in tRNA(Ile2) + L-lysine + ATP = lysidine(34) in tRNA(Ile2) + AMP + diphosphate + H(+). Its function is as follows. Ligates lysine onto the cytidine present at position 34 of the AUA codon-specific tRNA(Ile) that contains the anticodon CAU, in an ATP-dependent manner. Cytidine is converted to lysidine, thus changing the amino acid specificity of the tRNA from methionine to isoleucine. The polypeptide is tRNA(Ile)-lysidine synthase (Chlamydia caviae (strain ATCC VR-813 / DSM 19441 / 03DC25 / GPIC) (Chlamydophila caviae)).